A 557-amino-acid chain; its full sequence is Putative UDP-glucuronate:xylan alpha-glucuronosyltransferase 4 (557 aa).

The chain crosses the membrane as a helical; Signal-anchor for type II membrane protein span at residues 11–31 (KIFMIYLILVSLSLLGLILPF). Mn(2+) is bound by residues aspartate 365 and aspartate 367. Substrate contacts are provided by residues 365-367 (DAD), 394-396 (NSG), 421-425 (NGGDQ), and 466-471 (HYLGLK). Histidine 466 lines the Mn(2+) pocket.

Belongs to the glycosyltransferase 8 family. Glycogenin subfamily. Mn(2+) is required as a cofactor.

The protein resides in the golgi apparatus membrane. Functionally, may be involved in the substitutions of the xylan backbone in stem glucuronoxylan. The polypeptide is Putative UDP-glucuronate:xylan alpha-glucuronosyltransferase 4 (GUX4) (Arabidopsis thaliana (Mouse-ear cress)).